The primary structure comprises 680 residues: DNA-directed RNA polymerase subunit beta' (680 aa).

The Zn(2+) site is built by Cys69, Cys71, Cys87, and Cys90. Mg(2+)-binding residues include Asp489, Asp491, and Asp493.

The protein belongs to the RNA polymerase beta' chain family. RpoC1 subfamily. In plastids the minimal PEP RNA polymerase catalytic core is composed of four subunits: alpha, beta, beta', and beta''. When a (nuclear-encoded) sigma factor is associated with the core the holoenzyme is formed, which can initiate transcription. The cofactor is Mg(2+). Requires Zn(2+) as cofactor.

It is found in the plastid. It localises to the chloroplast. It catalyses the reaction RNA(n) + a ribonucleoside 5'-triphosphate = RNA(n+1) + diphosphate. Functionally, DNA-dependent RNA polymerase catalyzes the transcription of DNA into RNA using the four ribonucleoside triphosphates as substrates. This Barbarea verna (Land cress) protein is DNA-directed RNA polymerase subunit beta'.